A 334-amino-acid polypeptide reads, in one-letter code: Probable N5-carboxyaminoimidazole ribonucleotide mutase (334 aa).

Positions 11, 14, and 41 each coordinate substrate.

This sequence belongs to the AIR carboxylase family. Class I subfamily.

It catalyses the reaction 5-carboxyamino-1-(5-phospho-D-ribosyl)imidazole + H(+) = 5-amino-1-(5-phospho-D-ribosyl)imidazole-4-carboxylate. It participates in purine metabolism; IMP biosynthesis via de novo pathway; 5-amino-1-(5-phospho-D-ribosyl)imidazole-4-carboxylate from 5-amino-1-(5-phospho-D-ribosyl)imidazole (N5-CAIR route): step 2/2. Catalyzes the conversion of N5-carboxyaminoimidazole ribonucleotide (N5-CAIR) to 4-carboxy-5-aminoimidazole ribonucleotide (CAIR). This Methanothermobacter thermautotrophicus (strain ATCC 29096 / DSM 1053 / JCM 10044 / NBRC 100330 / Delta H) (Methanobacterium thermoautotrophicum) protein is Probable N5-carboxyaminoimidazole ribonucleotide mutase.